The primary structure comprises 204 residues: UPF0056 membrane protein CT_852 (204 aa).

6 helical membrane-spanning segments follow: residues 9-29 (TLLF…IALL), 39-59 (HIIL…VTFG), 66-86 (LGII…SIAI), 107-127 (IFFP…STLG), 138-158 (IVLG…LLSS), and 176-196 (FGIS…STAF).

Belongs to the UPF0056 (MarC) family.

It is found in the cell membrane. The protein is UPF0056 membrane protein CT_852 of Chlamydia trachomatis serovar D (strain ATCC VR-885 / DSM 19411 / UW-3/Cx).